A 481-amino-acid polypeptide reads, in one-letter code: Matrix metalloproteinase-20 (481 aa).

A signal peptide spans 1 to 20 (MLPASGLAVLLVTALKFSTA). Positions 21–105 (APSLPAASPR…PRCGVPDVAN (85 aa)) are excised as a propeptide. An N-linked (GlcNAc...) asparagine glycan is attached at N64. A Cysteine switch motif is present at residues 96–103 (PRCGVPDV). A Zn(2+)-binding site is contributed by C98. 3 residues coordinate Ca(2+): E162, A163, and D164. The Zn(2+) site is built by H174 and D176. Residues D181, G182, R184, and T186 each coordinate Ca(2+). H189 contacts Zn(2+). 4 residues coordinate Ca(2+): E195, G196, G198, and D200. H202 is a Zn(2+) binding site. Residues D204 and E207 each contribute to the Ca(2+) site. A Zn(2+)-binding site is contributed by H224. E225 is an active-site residue. Zn(2+) contacts are provided by H228 and H234. Hemopexin repeat units follow at residues 291-341 (PDLC…FPQL), 342-387 (MSNV…GFPR), 389-437 (VQRI…FSGV), and 438-481 (NGQI…WIGC). C294 and C481 are joined by a disulfide. N297 is a glycosylation site (N-linked (GlcNAc...) asparagine).

This sequence belongs to the peptidase M10A family. It depends on Zn(2+) as a cofactor. Ca(2+) serves as cofactor. Post-translationally, autoactivates at least at the 105-Asn-|-Tyr-106 site. Expressed in the enamel organ.

It is found in the secreted. The protein localises to the extracellular space. Its subcellular location is the extracellular matrix. Degrades amelogenin, the major protein component of the enamel matrix and two of the macromolecules characterizing the cartilage extracellular matrix: aggrecan and the cartilage oligomeric matrix protein (COMP). May play a central role in tooth enamel formation. Cleaves aggrecan at the '360-Ser-|-Phe-361' site. This Bos taurus (Bovine) protein is Matrix metalloproteinase-20 (MMP20).